We begin with the raw amino-acid sequence, 64 residues long: Cold shock protein CapA (64 aa).

A CSD domain is found at 7 to 64; the sequence is GTVKWFNDEKGFGFITPQGGGDDLFVHFKAIESDGFKSLKEGQTVSFVAEKGQKGMQA.

The protein localises to the cytoplasm. Its function is as follows. Affects cell viability at low temperatures. This chain is Cold shock protein CapA (capA), found in Pseudomonas fragi.